The chain runs to 871 residues: Isoleucine--tRNA ligase (871 aa).

Positions 57–67 match the 'HIGH' region motif; that stretch reads PYANGNLHMGH. An L-isoleucyl-5'-AMP-binding site is contributed by Glu-554. The short motif at 595-599 is the 'KMSKS' region element; it reads KMSKS. Residue Lys-598 participates in ATP binding.

This sequence belongs to the class-I aminoacyl-tRNA synthetase family. IleS type 1 subfamily. Monomer.

It localises to the cytoplasm. It catalyses the reaction tRNA(Ile) + L-isoleucine + ATP = L-isoleucyl-tRNA(Ile) + AMP + diphosphate. Its function is as follows. Catalyzes the attachment of isoleucine to tRNA(Ile). As IleRS can inadvertently accommodate and process structurally similar amino acids such as valine, to avoid such errors it has two additional distinct tRNA(Ile)-dependent editing activities. One activity is designated as 'pretransfer' editing and involves the hydrolysis of activated Val-AMP. The other activity is designated 'posttransfer' editing and involves deacylation of mischarged Val-tRNA(Ile). This Staphylococcus epidermidis protein is Isoleucine--tRNA ligase.